A 263-amino-acid polypeptide reads, in one-letter code: Endonuclease 8 (263 aa).

Catalysis depends on Pro-2, which acts as the Schiff-base intermediate with DNA. Glu-3 (proton donor) is an active-site residue. The active-site Proton donor; for beta-elimination activity is the Lys-53. DNA-binding residues include Gln-70, Arg-125, and Asn-169. The FPG-type zinc-finger motif lies at 229 to 263; it reads KVFHRDGEPCERCGSIIEKTTLSSRPFYWCPGCQH. The Proton donor; for delta-elimination activity role is filled by Arg-253.

The protein belongs to the FPG family. Zn(2+) is required as a cofactor.

It carries out the reaction 2'-deoxyribonucleotide-(2'-deoxyribose 5'-phosphate)-2'-deoxyribonucleotide-DNA = a 3'-end 2'-deoxyribonucleotide-(2,3-dehydro-2,3-deoxyribose 5'-phosphate)-DNA + a 5'-end 5'-phospho-2'-deoxyribonucleoside-DNA + H(+). Involved in base excision repair of DNA damaged by oxidation or by mutagenic agents. Acts as a DNA glycosylase that recognizes and removes damaged bases. Has a preference for oxidized pyrimidines, such as thymine glycol, 5,6-dihydrouracil and 5,6-dihydrothymine. Has AP (apurinic/apyrimidinic) lyase activity and introduces nicks in the DNA strand. Cleaves the DNA backbone by beta-delta elimination to generate a single-strand break at the site of the removed base with both 3'- and 5'-phosphates. The protein is Endonuclease 8 of Shigella sonnei (strain Ss046).